A 434-amino-acid chain; its full sequence is Rubisco accumulation factor 1.1, chloroplastic (434 aa).

The transit peptide at Met1 to Lys51 directs the protein to the chloroplast. The interval Ile65–Leu254 is N-terminal alpha-helix. Positions Val273 to Pro419 are C-terminal beta sheet.

Belongs to the RAF family. Homodimer.

The protein resides in the plastid. Its subcellular location is the chloroplast. Required for assembly or stability of RuBisCO. Acts at a postchaperonin step to fold and/or assemble the large subunit (rbcL) into RuBisCO. RAF1 binds first to a rbcL dimer (rbcL(2)), leading to a rbcL(8)-RAF1(4) complex formation. In the next step, RBCS displaces RAF1, thus resulting in holoenzyme formation. This Arabidopsis thaliana (Mouse-ear cress) protein is Rubisco accumulation factor 1.1, chloroplastic.